A 482-amino-acid polypeptide reads, in one-letter code: Ribosomal RNA small subunit methyltransferase F (482 aa).

Residues Ala119 to Lys125, Glu143, Asp170, and Asp188 each bind S-adenosyl-L-methionine. The active-site Nucleophile is Cys241.

This sequence belongs to the class I-like SAM-binding methyltransferase superfamily. RsmB/NOP family.

The protein localises to the cytoplasm. The enzyme catalyses cytidine(1407) in 16S rRNA + S-adenosyl-L-methionine = 5-methylcytidine(1407) in 16S rRNA + S-adenosyl-L-homocysteine + H(+). Functionally, specifically methylates the cytosine at position 1407 (m5C1407) of 16S rRNA. This is Ribosomal RNA small subunit methyltransferase F from Shewanella sp. (strain MR-7).